A 176-amino-acid chain; its full sequence is dCTP deaminase (176 aa).

Residues 102-107 (RSTFAR) and Asp-118 each bind dCTP. The active-site Proton donor/acceptor is the Glu-128. DCTP contacts are provided by Tyr-160, Lys-166, and Gln-167.

Belongs to the dCTP deaminase family. As to quaternary structure, homotrimer.

The enzyme catalyses dCTP + H2O + H(+) = dUTP + NH4(+). The protein operates within pyrimidine metabolism; dUMP biosynthesis; dUMP from dCTP (dUTP route): step 1/2. In terms of biological role, catalyzes the deamination of dCTP to dUTP. The protein is dCTP deaminase of Staphylothermus marinus (strain ATCC 43588 / DSM 3639 / JCM 9404 / F1).